The sequence spans 147 residues: Hemoglobin subunit beta (147 aa).

Residues H3 to H147 form the Globin domain. H64 and H93 together coordinate heme b.

This sequence belongs to the globin family. As to quaternary structure, heterotetramer of two alpha-D chains and two beta chains. As to expression, red blood cells.

Involved in oxygen transport from the lung to the various peripheral tissues. The chain is Hemoglobin subunit beta (HBB) from Chelonoidis carbonarius (Red-footed tortoise).